The following is a 492-amino-acid chain: MIITQTSHCYMTSLGILFLINILPGTTGQGESRRQEPGDFVKQDIGGLSPKHAPDIPDDSTDNITIFTRILDRLLDGYDNRLRPGLGDAVTEVKTDIYVTSFGPVSDTDMEYTIDVFFRQTWHDERLKFDGPMKILPLNNLLASKIWTPDTFFHNGKKSVAHNMTTPNKLLRLVDNGTLLYTMRLTIHAECPMHLEDFPMDVHACPLKFGSYAYTTAEVVYSWTLGKNKSVEVAQDGSRLNQYDLLGHVVGTEIIRSSTGEYVVMTTHFHLKRKIGYFVIQTYLPCIMTVILSQVSFWLNRESVPARTVFGVTTVLTMTTLSISARNSLPKVAYATAMDWFIAVCYAFVFSALIEFATVNYFTKRSWAWEGKKVPEALEMKKKTPAAPAKKTSTTFNIVGTTYPINLAKDTEFSTISKGAAPSASSTPTIIASPKATYVQDSPTETKTYNSVSKVDKISRIIFPVLFAIFNLVYWATYVNRESAIKGMIRKQ.

The N-terminal stretch at 1-28 (MIITQTSHCYMTSLGILFLINILPGTTG) is a signal peptide. Residues 28-54 (GQGESRRQEPGDFVKQDIGGLSPKHAP) are disordered. Over 29-274 (QGESRRQEPG…MTTHFHLKRK (246 aa)) the chain is Extracellular. Basic and acidic residues predominate over residues 31-42 (ESRRQEPGDFVK). Residue N63 is glycosylated (N-linked (GlcNAc...) asparagine). Residue R119 participates in 4-aminobutanoate binding. Residues N163 and N176 are each glycosylated (N-linked (GlcNAc...) asparagine). Residue T182 participates in 4-aminobutanoate binding. C191 and C205 are joined by a disulfide. An N-linked (GlcNAc...) asparagine glycan is attached at N228. A helical transmembrane segment spans residues 275-295 (IGYFVIQTYLPCIMTVILSQV). Topologically, residues 296–305 (SFWLNRESVP) are cytoplasmic. Residues 306–325 (ARTVFGVTTVLTMTTLSISA) traverse the membrane as a helical segment. Residues 326-336 (RNSLPKVAYAT) are Extracellular-facing. Residues 337–357 (AMDWFIAVCYAFVFSALIEFA) form a helical membrane-spanning segment. At 358-457 (TVNYFTKRSW…TYNSVSKVDK (100 aa)) the chain is on the cytoplasmic side. Position 426 is a phosphoserine (S426). T427 carries the phosphothreonine modification. Phosphoserine occurs at positions 433 and 442. A helical transmembrane segment spans residues 458–478 (ISRIIFPVLFAIFNLVYWATY). Over 479 to 492 (VNRESAIKGMIRKQ) the chain is Extracellular.

This sequence belongs to the ligand-gated ion channel (TC 1.A.9) family. Gamma-aminobutyric acid receptor (TC 1.A.9.5) subfamily. GABRA3 sub-subfamily. Heteropentamer, formed by a combination of alpha (GABRA1-6), beta (GABRB1-3), gamma (GABRG1-3), delta (GABRD), epsilon (GABRE), rho (GABRR1-3), pi (GABRP) and theta (GABRQ) chains, each subunit exhibiting distinct physiological and pharmacological properties. Binds UBQLN1. Interacts with GPHN.

Its subcellular location is the postsynaptic cell membrane. The protein localises to the cell membrane. It carries out the reaction chloride(in) = chloride(out). Its activity is regulated as follows. Potentiated by etomidate, propofol, pregnanolone and flurazepam. In terms of biological role, alpha subunit of the heteropentameric ligand-gated chloride channel gated by gamma-aminobutyric acid (GABA), a major inhibitory neurotransmitter in the brain. GABA-gated chloride channels, also named GABA(A) receptors (GABAAR), consist of five subunits arranged around a central pore and contain GABA active binding site(s) located at the alpha and beta subunit interface(s). When activated by GABA, GABAARs selectively allow the flow of chloride anions across the cell membrane down their electrochemical gradient. Chloride influx into the postsynaptic neuron following GABAAR opening decreases the neuron ability to generate a new action potential, thereby reducing nerve transmission. The protein is Gamma-aminobutyric acid receptor subunit alpha-3 of Homo sapiens (Human).